The following is a 259-amino-acid chain: tRNA (guanine-N(7)-)-methyltransferase (259 aa).

Positions 1 to 11 (MSNTDNSDKNT) are enriched in basic and acidic residues. A disordered region spans residues 1 to 29 (MSNTDNSDKNTKPTGYRPPQTDFNTEFGN). Positions 89, 114, 141, and 164 each coordinate S-adenosyl-L-methionine. D164 is a catalytic residue. Residues K168, D200, and 238–241 (TKFE) each bind substrate.

The protein belongs to the class I-like SAM-binding methyltransferase superfamily. TrmB family.

The enzyme catalyses guanosine(46) in tRNA + S-adenosyl-L-methionine = N(7)-methylguanosine(46) in tRNA + S-adenosyl-L-homocysteine. It functions in the pathway tRNA modification; N(7)-methylguanine-tRNA biosynthesis. In terms of biological role, catalyzes the formation of N(7)-methylguanine at position 46 (m7G46) in tRNA. The sequence is that of tRNA (guanine-N(7)-)-methyltransferase from Corynebacterium diphtheriae (strain ATCC 700971 / NCTC 13129 / Biotype gravis).